A 239-amino-acid polypeptide reads, in one-letter code: DNA repair protein RecO (239 aa).

The protein belongs to the RecO family.

In terms of biological role, involved in DNA repair and RecF pathway recombination. The polypeptide is DNA repair protein RecO (Christiangramia forsetii (strain DSM 17595 / CGMCC 1.15422 / KT0803) (Gramella forsetii)).